The sequence spans 463 residues: Phosphomannomutase (463 aa).

The active-site Phosphoserine intermediate is the serine 103. Residues serine 103, aspartate 248, aspartate 250, and aspartate 252 each coordinate Mg(2+).

It belongs to the phosphohexose mutase family. Requires Mg(2+) as cofactor.

It is found in the cell membrane. It catalyses the reaction alpha-D-mannose 1-phosphate = D-mannose 6-phosphate. Its pathway is nucleotide-sugar biosynthesis; GDP-alpha-D-mannose biosynthesis; alpha-D-mannose 1-phosphate from D-fructose 6-phosphate: step 2/2. It functions in the pathway bacterial outer membrane biogenesis; LPS O-antigen biosynthesis. Functionally, involved in GDP-mannose biosynthesis which serves as the activated sugar nucleotide precursor for mannose residues in cell surface polysaccharides. The protein is Phosphomannomutase (rfbB) of Vibrio cholerae serotype O1 (strain ATCC 39315 / El Tor Inaba N16961).